A 403-amino-acid chain; its full sequence is MNILVVNAGSSSLKSSLFLTVEGRVEATPIWQAQVDFTYKPGEALIQTRRRGGGWEPFPSASPEGGIGQLAPLFQSLWQGEGSLLPQAAEIGGVGHRVVHGGSLYRQPTLITPEVERAIEQLIPLAPAHNPAALAGIRLLRQLLPGIPQVAVFDTAFHQQMPLAAALYPLPYAWAEQGIRRYGFHGINHEHCARRAAEILNRPLEELRLITCHLGNGCSLAAIRGGRSVDTTMGYTPLEGLMMGSRSGSVDPGILIHQLRQGMSVDELDRILNRESGLKGVSGLSSDMRVVLEAMEAGHARAELAFELFVHRLRSQIGAMLMSLDRLDALVFSGGIGENSAPVRAAACADLGFLGIQIDPVLNAGSPRNCDISTSDAPVRVLVISAQEDWAIATACQNLLQGE.

Asparagine 7 serves as a coordination point for Mg(2+). Residue lysine 14 coordinates ATP. Arginine 97 serves as a coordination point for substrate. The active-site Proton donor/acceptor is the aspartate 154. ATP-binding positions include 213–217 (HLGNG), 287–289 (DMR), and 335–339 (GIGEN). Glutamate 388 provides a ligand contact to Mg(2+).

The protein belongs to the acetokinase family. Homodimer. The cofactor is Mg(2+). It depends on Mn(2+) as a cofactor.

The protein resides in the cytoplasm. It catalyses the reaction acetate + ATP = acetyl phosphate + ADP. The protein operates within metabolic intermediate biosynthesis; acetyl-CoA biosynthesis; acetyl-CoA from acetate: step 1/2. In terms of biological role, catalyzes the formation of acetyl phosphate from acetate and ATP. Can also catalyze the reverse reaction. The sequence is that of Acetate kinase from Synechococcus sp. (strain JA-2-3B'a(2-13)) (Cyanobacteria bacterium Yellowstone B-Prime).